We begin with the raw amino-acid sequence, 73 residues long: MGMSGSSGLVHVLMLLLLLSILFHHTESTLPSDSEQLSITGRRMMANYKPNTAVETPPSRSRRGGGGQNTGAD.

The signal sequence occupies residues 1–28; it reads MGMSGSSGLVHVLMLLLLLSILFHHTES. The segment at 48–73 is disordered; it reads YKPNTAVETPPSRSRRGGGGQNTGAD. Positions 53 to 67 match the SCOOP motif motif; that stretch reads AVETPPSRSRRGGGG. The short motif at 59-61 is the SxS motif essential for MIK2 binding element; the sequence is SRS. The span at 64 to 73 shows a compositional bias: gly residues; that stretch reads GGGGQNTGAD.

Belongs to the serine rich endogenous peptide (SCOOP) phytocytokine family. In terms of assembly, interacts with MIK2 (via extracellular leucine-rich repeat domain); this interaction triggers the formation of complex between MIK2 and the BAK1/SERK3 and SERK4 coreceptors, and subsequent BAK1 activation by phosphorylation. Mostly expressed in leaves and flowers, and, to a lower extent, in seedlings shoots.

The protein resides in the cell membrane. The protein localises to the secreted. It localises to the extracellular space. Its subcellular location is the apoplast. Brassicaceae-specific phytocytokine (plant endogenous peptide released into the apoplast) perceived by MIK2 in a BAK1/SERK3 and SERK4 coreceptors-dependent manner, that modulates various physiological and antimicrobial processes including growth prevention and reactive oxygen species (ROS) response regulation. In Arabidopsis thaliana (Mouse-ear cress), this protein is Serine rich endogenous peptide 1.